Here is a 304-residue protein sequence, read N- to C-terminus: Dihydroorotate dehydrogenase B (NAD(+)), catalytic subunit (304 aa).

Residues serine 22 and 46-47 (KG) each bind FMN. Substrate is bound by residues lysine 46 and 70 to 74 (NAIGL). FMN contacts are provided by asparagine 100 and asparagine 128. Asparagine 128 is a binding site for substrate. Cysteine 131 functions as the Nucleophile in the catalytic mechanism. The FMN site is built by lysine 166 and isoleucine 192. 193 to 194 (NT) provides a ligand contact to substrate. FMN is bound by residues glycine 218, 244–245 (GG), and 266–267 (GT).

The protein belongs to the dihydroorotate dehydrogenase family. Type 1 subfamily. Heterotetramer of 2 PyrK and 2 PyrD type B subunits. FMN serves as cofactor.

It is found in the cytoplasm. It catalyses the reaction (S)-dihydroorotate + NAD(+) = orotate + NADH + H(+). Its pathway is pyrimidine metabolism; UMP biosynthesis via de novo pathway; orotate from (S)-dihydroorotate (NAD(+) route): step 1/1. Its function is as follows. Catalyzes the conversion of dihydroorotate to orotate with NAD(+) as electron acceptor. The chain is Dihydroorotate dehydrogenase B (NAD(+)), catalytic subunit (pyrD) from Pelobacter propionicus (strain DSM 2379 / NBRC 103807 / OttBd1).